The primary structure comprises 136 residues: Large ribosomal subunit protein uL16 (136 aa).

Over residues 1 to 17 the composition is skewed to basic residues; that stretch reads MLQPKRTKFRKRHKGRN. Residues 1–21 are disordered; that stretch reads MLQPKRTKFRKRHKGRNRGLA.

The protein belongs to the universal ribosomal protein uL16 family. Part of the 50S ribosomal subunit.

Its function is as follows. Binds 23S rRNA and is also seen to make contacts with the A and possibly P site tRNAs. This chain is Large ribosomal subunit protein uL16, found in Buchnera aphidicola subsp. Acyrthosiphon kondoi (Acyrthosiphon kondoi symbiotic bacterium).